The sequence spans 362 residues: Phospho-N-acetylmuramoyl-pentapeptide-transferase (362 aa).

The next 10 membrane-spanning stretches (helical) occupy residues 18 to 38 (VFGYITLRTVLAALTALAISL), 73 to 93 (TMGGALILIAIGITILLWGDL), 97 to 117 (YVWVTLLVTLGFGAVGWVDDW), 134 to 154 (YFWTSAIALGASIFLGLSATT), 160 to 180 (LIVPFFKAVAYPLGVYGFIAL), 200 to 220 (GLAIMPTVMVAGALAIFAYVA), 237 to 257 (AGELAVFCGAICGAGLGFLWF), 264 to 284 (VFMGDVGALALGAALGTIAVV), 289 to 309 (IVLFIMGGLFVAETLSVMVQV), and 339 to 359 (QVVVRFWIITLMLVLFGLSTL).

Belongs to the glycosyltransferase 4 family. MraY subfamily. Mg(2+) is required as a cofactor.

The protein resides in the cell inner membrane. The enzyme catalyses UDP-N-acetyl-alpha-D-muramoyl-L-alanyl-gamma-D-glutamyl-meso-2,6-diaminopimeloyl-D-alanyl-D-alanine + di-trans,octa-cis-undecaprenyl phosphate = di-trans,octa-cis-undecaprenyl diphospho-N-acetyl-alpha-D-muramoyl-L-alanyl-D-glutamyl-meso-2,6-diaminopimeloyl-D-alanyl-D-alanine + UMP. It functions in the pathway cell wall biogenesis; peptidoglycan biosynthesis. Functionally, catalyzes the initial step of the lipid cycle reactions in the biosynthesis of the cell wall peptidoglycan: transfers peptidoglycan precursor phospho-MurNAc-pentapeptide from UDP-MurNAc-pentapeptide onto the lipid carrier undecaprenyl phosphate, yielding undecaprenyl-pyrophosphoryl-MurNAc-pentapeptide, known as lipid I. The polypeptide is Phospho-N-acetylmuramoyl-pentapeptide-transferase (Azoarcus sp. (strain BH72)).